Here is a 178-residue protein sequence, read N- to C-terminus: Nicotinamide-nucleotide adenylyltransferase (178 aa).

It belongs to the archaeal NMN adenylyltransferase family.

It is found in the cytoplasm. It carries out the reaction beta-nicotinamide D-ribonucleotide + ATP + H(+) = diphosphate + NAD(+). It functions in the pathway cofactor biosynthesis; NAD(+) biosynthesis; NAD(+) from nicotinamide D-ribonucleotide: step 1/1. The protein is Nicotinamide-nucleotide adenylyltransferase of Thermoplasma volcanium (strain ATCC 51530 / DSM 4299 / JCM 9571 / NBRC 15438 / GSS1).